Consider the following 185-residue polypeptide: Ribosome-recycling factor (185 aa).

It belongs to the RRF family.

It localises to the cytoplasm. Functionally, responsible for the release of ribosomes from messenger RNA at the termination of protein biosynthesis. May increase the efficiency of translation by recycling ribosomes from one round of translation to another. The polypeptide is Ribosome-recycling factor (Aeromonas salmonicida (strain A449)).